Here is a 572-residue protein sequence, read N- to C-terminus: Proline--tRNA ligase (572 aa).

It belongs to the class-II aminoacyl-tRNA synthetase family. ProS type 1 subfamily. As to quaternary structure, homodimer.

It is found in the cytoplasm. The catalysed reaction is tRNA(Pro) + L-proline + ATP = L-prolyl-tRNA(Pro) + AMP + diphosphate. In terms of biological role, catalyzes the attachment of proline to tRNA(Pro) in a two-step reaction: proline is first activated by ATP to form Pro-AMP and then transferred to the acceptor end of tRNA(Pro). As ProRS can inadvertently accommodate and process non-cognate amino acids such as alanine and cysteine, to avoid such errors it has two additional distinct editing activities against alanine. One activity is designated as 'pretransfer' editing and involves the tRNA(Pro)-independent hydrolysis of activated Ala-AMP. The other activity is designated 'posttransfer' editing and involves deacylation of mischarged Ala-tRNA(Pro). The misacylated Cys-tRNA(Pro) is not edited by ProRS. The chain is Proline--tRNA ligase from Edwardsiella ictaluri (strain 93-146).